Reading from the N-terminus, the 740-residue chain is MASHLRPPSPLLVRVYKSGPRVRRKLESYFQSSKSSGGGECTVSTQEHEAPGTFRVEFSERAAKERVLKKGEHQILVDEKPVPIFLVPTENSIKKNTRPQISSLTQSQAETPSGDMHQHEGHIPNAVDSCLQKIFLTVTADLNCNLFSKEQRAYITTLCPSIRKMEGHDGIEKVCGDFQDIERIHQFLSEQFLESEQKQQFSPSMTERKPLSQQERDSCISPSEPETKAEQKSNYFEVPLPYFEYFKYICPDKINSIEKRFGVNIEIQESSPNMVCLDFTSSRSGDLEAARESFASEFQKNTEPLKQECVSLADSKQANKFKQELNHQFTKLLIKEKGGELTLLGTQDDISAAKQKISEAFVKIPVKLFAANYMMNVIEVDSAHYKLLETELLQEISEIEKRYDICSKVSEKGQKTCILFESKDRQVDLSVHAYASFIDAFQHASCQLMREVLLLKSLGKERKHLHQTKFADDFRKRHPNVHFVLNQESMTLTGLPNHLAKAKQYVLKGGGMSSLAGKKLKEGHETPMDIDSDDSKAASPPLKGSVSSEASELDKKEKGICVICMDTISNKKVLPKCKHEFCAPCINKAMSYKPICPTCQTSYGIQKGNQPEGSMVFTVSRDSLPGYESFGTIVITYSMKAGIQTEEHPNPGKRYPGIQRTAYLPDNKEGRKVLKLLYRAFDQKLIFTVGYSRVLGVSDVITWNDIHHKTSRFGGPEMYGYPDPSYLKRVKEELKAKGIE.

Alanine 2 is modified (N-acetylalanine). Position 9 is a phosphoserine (serine 9). 3 disordered regions span residues 96–119, 195–231, and 524–551; these read NTRP…MHQH, SEQK…KAEQ, and HETP…SEAS. Composition is skewed to polar residues over residues 98–111 and 195–205; these read RPQI…QAET and SEQKQQFSPSM. A Phosphoserine modification is found at serine 202. Positions 206-218 are enriched in basic and acidic residues; it reads TERKPLSQQERDS. Serine 221, serine 532, and serine 539 each carry phosphoserine. The segment at 561-600 adopts an RING-type zinc-finger fold; the sequence is CVICMDTISNKKVLPKCKHEFCAPCINKAMSYKPICPTCQ.

Belongs to the Deltex family. As to quaternary structure, homodimer and heterodimer. Can heterodimerize with DTX1, enhancing its ubiquitin ligase activity in vitro. Interacts (via N-terminus) with ADP ribosyltransferase PARP9/BAL1 (via PARP catalytic domain) forming a stable complex; the interaction is required to activate PARP9 but is dispensable for DTX3L catalytic activity. Forms a complex with STAT1 and PARP9 independently of IFNB1 or IFNG-mediated STAT1 'Tyr-701' phosphorylation. Found in a complex with PARP9, STAT1 and H2BC9. Found in a complex with E3 ligase ITCH and ESCRT-0 components HGS and STAM. Interacts (via C-terminus) with ITCH; the interaction is increased upon CXCL12 stimulation and inhibits ITCH catalytic activity; the interaction is direct. Interacts with HGS and STAM; the interaction brings together HGS and STAM and promotes their recruitment to early endosomes. In terms of assembly, (Microbial infection) Interacts with encephalomyocarditis virus (EMCV) C3 protease; the interaction results in C3 protease 'Lys-48'-linked ubiquitination. (Microbial infection) Interacts with human rhinovirus (HRV) C3 protease; the interaction results in C3 protease 'Lys-48'-linked ubiquitination. Post-translationally, autoubiquitinated.

The protein resides in the cytoplasm. Its subcellular location is the nucleus. The protein localises to the early endosome membrane. It localises to the lysosome membrane. It carries out the reaction S-ubiquitinyl-[E2 ubiquitin-conjugating enzyme]-L-cysteine + [acceptor protein]-L-lysine = [E2 ubiquitin-conjugating enzyme]-L-cysteine + N(6)-ubiquitinyl-[acceptor protein]-L-lysine.. It functions in the pathway protein modification; protein ubiquitination. Binding to PARP9 enhances DTX3L catalytic activity. Functionally, E3 ubiquitin-protein ligase which, in association with ADP-ribosyltransferase PARP9, plays a role in DNA damage repair and in interferon-mediated antiviral responses. Monoubiquitinates several histones, including histone H2A, H2B, H3 and H4. In response to DNA damage, mediates monoubiquitination of 'Lys-91' of histone H4 (H4K91ub1). The exact role of H4K91ub1 in DNA damage response is still unclear but it may function as a licensing signal for additional histone H4 post-translational modifications such as H4 'Lys-20' methylation (H4K20me). PARP1-dependent PARP9-DTX3L-mediated ubiquitination promotes the rapid and specific recruitment of 53BP1/TP53BP1, UIMC1/RAP80, and BRCA1 to DNA damage sites. By monoubiquitinating histone H2B H2BC9/H2BJ and thereby promoting chromatin remodeling, positively regulates STAT1-dependent interferon-stimulated gene transcription and thus STAT1-mediated control of viral replication. Independently of its catalytic activity, promotes the sorting of chemokine receptor CXCR4 from early endosome to lysosome following CXCL12 stimulation by reducing E3 ligase ITCH activity and thus ITCH-mediated ubiquitination of endosomal sorting complex required for transport ESCRT-0 components HGS and STAM. In addition, required for the recruitment of HGS and STAM to early endosomes. In association with PARP9, plays a role in antiviral responses by mediating 'Lys-48'-linked ubiquitination of encephalomyocarditis virus (EMCV) and human rhinovirus (HRV) C3 proteases and thus promoting their proteasomal-mediated degradation. In Homo sapiens (Human), this protein is E3 ubiquitin-protein ligase DTX3L (DTX3L).